Reading from the N-terminus, the 218-residue chain is Sodium channel regulatory subunit beta-1 (218 aa).

Positions 1-18 (MGRLLAFVVGAALVSSAW) are cleaved as a signal peptide. The Extracellular portion of the chain corresponds to 19–157 (GGCVEVDSET…DKANRDMASI (139 aa)). Cystine bridges form between C21/C43 and C40/C121. An Ig-like C2-type domain is found at 22–150 (VEVDSETEAV…KIHLEVVDKA (129 aa)). Residues N93, N110, N114, and N135 are each glycosylated (N-linked (GlcNAc...) asparagine). The chain crosses the membrane as a helical span at residues 158 to 179 (VSEIMMYVLIVVLTIWLVAEMV). Residues 180–218 (YCYKKIAAATEAAAQENASEYLAITSESKENCTGVQVAE) are Cytoplasmic-facing.

This sequence belongs to the sodium channel auxiliary subunit SCN1B (TC 8.A.17) family. A voltage-gated sodium (Nav) channel consists of an ion-conducting pore-forming alpha subunit functional on its own that is regulated by one or more beta subunits. Interacts with SCN1A; regulatory subunit of SCN1A/Nav1.1. Interacts with SCN3A; regulatory subunit of SCN3A/Nav1.3. Interacts with SCN4A; regulatory subunit of SCN4A/Nav1.4. Interacts with SCN5A; regulatory subunit of SCN5A/Nav1.5. Interacts with SCN8A; regulatory subunit of SCN8A/Nav1.6. Interacts with SCN9A; regulatory subunit of SCN9A/Nav1.7. Interacts with SCN10A; regulatory subunit of SCN10A/Nav1.8. Interacts with NFASC. Interacts with TMEM65.

It localises to the cell membrane. It is found in the perikaryon. Its subcellular location is the cell projection. The protein resides in the axon. Regulatory subunit of multiple voltage-gated sodium (Nav) channels directly mediating the depolarization of excitable membranes. Navs, also called VGSCs (voltage-gated sodium channels) or VDSCs (voltage-dependent sodium channels), operate by switching between closed and open conformations depending on the voltage difference across the membrane. In the open conformation they allow Na(+) ions to selectively pass through the pore, along their electrochemical gradient. The influx of Na+ ions provokes membrane depolarization, initiating the propagation of electrical signals throughout cells and tissues. The accessory beta subunits participate in localization and functional modulation of the Nav channels. Modulates the activity of SCN1A/Nav1.1, SCN2A/Nav1.2, SCN3A/Nav1.3, SCN4A/Nav1.4, SCN5A/Nav1.5, SCN8A/Nav1.6, SCN9A/Nav1.7 and SCN10A/Nav1.8. This Oryctolagus cuniculus (Rabbit) protein is Sodium channel regulatory subunit beta-1.